The chain runs to 38 residues: Photosystem II reaction center protein X 2 (38 aa).

A helical membrane pass occupies residues 8-28; that stretch reads FLWSLVYGAVVLGLLFGAIVF.

Belongs to the PsbX family. Type 1 subfamily. As to quaternary structure, PSII is composed of 1 copy each of membrane proteins PsbA, PsbB, PsbC, PsbD, PsbE, PsbF, PsbH, PsbI, PsbJ, PsbK, PsbL, PsbM, PsbT, PsbX, PsbY, PsbZ, Psb30/Ycf12, peripheral proteins PsbO, CyanoQ (PsbQ), PsbU, PsbV and a large number of cofactors. It forms dimeric complexes.

It localises to the cellular thylakoid membrane. Involved in the binding and/or turnover of quinones at the Q(B) site of photosystem II (PSII). PSII is a light-driven water plastoquinone oxidoreductase, using light energy to abstract electrons from H(2)O, generating a proton gradient subsequently used for ATP formation. This is Photosystem II reaction center protein X 2 from Synechococcus sp. (strain JA-3-3Ab) (Cyanobacteria bacterium Yellowstone A-Prime).